The primary structure comprises 190 residues: Large ribosomal subunit protein bL9 (190 aa).

This sequence belongs to the bacterial ribosomal protein bL9 family.

In terms of biological role, binds to the 23S rRNA. The polypeptide is Large ribosomal subunit protein bL9 (Rhodobacter capsulatus (strain ATCC BAA-309 / NBRC 16581 / SB1003)).